The chain runs to 261 residues: uncharacterized protein (261 aa).

Belongs to the FwdC/FmdC family.

This is an uncharacterized protein from Methanocaldococcus jannaschii (strain ATCC 43067 / DSM 2661 / JAL-1 / JCM 10045 / NBRC 100440) (Methanococcus jannaschii).